Consider the following 322-residue polypeptide: Protein prune homolog 2 (322 aa).

Residues 1–110 are disordered; sequence MDIHFEEGVL…SIPEYTAEEE (110 aa). A compositionally biased stretch (polar residues) spans 40–52; that stretch reads PNINLSLDQSEGS. Positions 57–80 are enriched in acidic residues; that stretch reads DNLDSPDEIDINVDELDTPDEADS. In terms of domain architecture, CRAL-TRIO spans 130 to 291; sequence DMKVIEPYRR…SIIKYDEEKS (162 aa).

It localises to the cytoplasm. May play an important role in regulating differentiation, survival and aggressiveness of the tumor cells. This is Protein prune homolog 2 (Prune2) from Rattus norvegicus (Rat).